Reading from the N-terminus, the 318-residue chain is 4-hydroxy-3-methylbut-2-enyl diphosphate reductase (318 aa).

Cys21 serves as a coordination point for [4Fe-4S] cluster. Positions 50 and 83 each coordinate (2E)-4-hydroxy-3-methylbut-2-enyl diphosphate. Dimethylallyl diphosphate contacts are provided by His50 and His83. His50 and His83 together coordinate isopentenyl diphosphate. Position 105 (Cys105) interacts with [4Fe-4S] cluster. His133 is a (2E)-4-hydroxy-3-methylbut-2-enyl diphosphate binding site. Residue His133 coordinates dimethylallyl diphosphate. His133 provides a ligand contact to isopentenyl diphosphate. Catalysis depends on Glu135, which acts as the Proton donor. Residue Thr176 participates in (2E)-4-hydroxy-3-methylbut-2-enyl diphosphate binding. Residue Cys206 coordinates [4Fe-4S] cluster. (2E)-4-hydroxy-3-methylbut-2-enyl diphosphate is bound by residues Ser234, Ser235, Asn236, and Ser278. Residues Ser234, Ser235, Asn236, and Ser278 each contribute to the dimethylallyl diphosphate site. 4 residues coordinate isopentenyl diphosphate: Ser234, Ser235, Asn236, and Ser278.

This sequence belongs to the IspH family. The cofactor is [4Fe-4S] cluster.

The catalysed reaction is isopentenyl diphosphate + 2 oxidized [2Fe-2S]-[ferredoxin] + H2O = (2E)-4-hydroxy-3-methylbut-2-enyl diphosphate + 2 reduced [2Fe-2S]-[ferredoxin] + 2 H(+). It catalyses the reaction dimethylallyl diphosphate + 2 oxidized [2Fe-2S]-[ferredoxin] + H2O = (2E)-4-hydroxy-3-methylbut-2-enyl diphosphate + 2 reduced [2Fe-2S]-[ferredoxin] + 2 H(+). The protein operates within isoprenoid biosynthesis; dimethylallyl diphosphate biosynthesis; dimethylallyl diphosphate from (2E)-4-hydroxy-3-methylbutenyl diphosphate: step 1/1. It functions in the pathway isoprenoid biosynthesis; isopentenyl diphosphate biosynthesis via DXP pathway; isopentenyl diphosphate from 1-deoxy-D-xylulose 5-phosphate: step 6/6. Catalyzes the conversion of 1-hydroxy-2-methyl-2-(E)-butenyl 4-diphosphate (HMBPP) into a mixture of isopentenyl diphosphate (IPP) and dimethylallyl diphosphate (DMAPP). Acts in the terminal step of the DOXP/MEP pathway for isoprenoid precursor biosynthesis. This chain is 4-hydroxy-3-methylbut-2-enyl diphosphate reductase, found in Shewanella oneidensis (strain ATCC 700550 / JCM 31522 / CIP 106686 / LMG 19005 / NCIMB 14063 / MR-1).